The following is a 795-amino-acid chain: Mitochondrial inner membrane m-AAA protease component paraplegin (795 aa).

A mitochondrion-targeting transit peptide spans 1 to 43; the sequence is MAVLLLLLRALRRGPGPGPRPLWGPGPAWSPGFPARPGRGRPY. Positions 44-105 are cleaved as a propeptide — removed in mature form; it reads MASRPPGDLA…GGTFYFNTSR (62 aa). The Mitochondrial matrix portion of the chain corresponds to 106–144; the sequence is LKQKNKEKDKSKGKAPEEDEEERRRRERDDQMYRERLRT. A disordered region spans residues 108-133; the sequence is QKNKEKDKSKGKAPEEDEEERRRRER. The span at 109–133 shows a compositional bias: basic and acidic residues; the sequence is KNKEKDKSKGKAPEEDEEERRRRER. A helical transmembrane segment spans residues 145-165; sequence LLVIAVVMSLLNALSTSGGSI. Over 166-248 the chain is Mitochondrial intermembrane; that stretch reads SWNDFVHEML…DRIPVSYKRT (83 aa). A helical transmembrane segment spans residues 249–269; that stretch reads GFFGNALYSVGMTAVGLAILW. Residues 270–795 lie on the Mitochondrial matrix side of the membrane; that stretch reads YVFRLAGMTG…LGGEEPTWPK (526 aa). ATP is bound by residues Ala312, Gly352, Cys353, Gly354, Lys355, Thr356, and Leu357. 3'-nitrotyrosine is present on Tyr505. His574 contributes to the Zn(2+) binding site. The active site involves Glu575. Positions 578 and 650 each coordinate Zn(2+). An interaction with PPIF region spans residues 701-795; the sequence is HEARLLVAKA…LGGEEPTWPK (95 aa). The disordered stretch occupies residues 751-795; it reads PHGPKKMIAPQRWIDAQREKQDLGEEETEETQQPPLGGEEPTWPK.

In the N-terminal section; belongs to the AAA ATPase family. This sequence in the C-terminal section; belongs to the peptidase M41 family. As to quaternary structure, forms heterooligomers with AFG3L2; the m-AAA protease is composed of heterohexamers of AFG3L2 and SPG7. Component of the mitochondrial permeability transition pore complex (mPTPC), at least composed of SPG7, VDAC1 and PPIF. Interacts with MAIP1. Zn(2+) is required as a cofactor. Post-translationally, upon import into the mitochondrion, the N-terminal transit peptide is cleaved by the mitochondrial-processing peptidase (MPP) to generate an intermediate form which undergoes a second proteolytic cleavage mediated by proteases AFG3L2 removing an additional N-terminal fragment to generate the proteolytically active mature form. As to expression, ubiquitous.

It is found in the mitochondrion inner membrane. The enzyme catalyses ATP + H2O = ADP + phosphate + H(+). In terms of biological role, catalytic component of the m-AAA protease, a protease that plays a key role in proteostasis of inner mitochondrial membrane proteins, and which is essential for axonal and neuron development. SPG7 possesses both ATPase and protease activities: the ATPase activity is required to unfold substrates, threading them into the internal proteolytic cavity for hydrolysis into small peptide fragments. The m-AAA protease exerts a dual role in the mitochondrial inner membrane: it mediates the processing of specific regulatory proteins and ensures protein quality control by degrading misfolded polypeptides. Mediates protein maturation of the mitochondrial ribosomal subunit MRPL32/bL32m by catalyzing the cleavage of the presequence of MRPL32/bL32m prior to assembly into the mitochondrial ribosome. Acts as a regulator of calcium in neurons by mediating degradation of SMDT1/EMRE before its assembly with the uniporter complex, limiting the availability of SMDT1/EMRE for MCU assembly and promoting efficient assembly of gatekeeper subunits with MCU. Also regulates mitochondrial calcium by catalyzing degradation of MCU. Plays a role in the formation and regulation of the mitochondrial permeability transition pore (mPTP) and its proteolytic activity is dispensable for this function. The polypeptide is Mitochondrial inner membrane m-AAA protease component paraplegin (Homo sapiens (Human)).